The primary structure comprises 426 residues: Serine--tRNA ligase (426 aa).

L-serine is bound at residue 233 to 235; the sequence is TAE. 264-266 contributes to the ATP binding site; the sequence is RAE. Glu287 provides a ligand contact to L-serine. 351–354 lines the ATP pocket; it reads EISS. L-serine is bound at residue Ser387.

The protein belongs to the class-II aminoacyl-tRNA synthetase family. Type-1 seryl-tRNA synthetase subfamily. Homodimer. The tRNA molecule binds across the dimer.

Its subcellular location is the cytoplasm. The catalysed reaction is tRNA(Ser) + L-serine + ATP = L-seryl-tRNA(Ser) + AMP + diphosphate + H(+). It carries out the reaction tRNA(Sec) + L-serine + ATP = L-seryl-tRNA(Sec) + AMP + diphosphate + H(+). It participates in aminoacyl-tRNA biosynthesis; selenocysteinyl-tRNA(Sec) biosynthesis; L-seryl-tRNA(Sec) from L-serine and tRNA(Sec): step 1/1. Catalyzes the attachment of serine to tRNA(Ser). Is also able to aminoacylate tRNA(Sec) with serine, to form the misacylated tRNA L-seryl-tRNA(Sec), which will be further converted into selenocysteinyl-tRNA(Sec). The polypeptide is Serine--tRNA ligase (Clostridium novyi (strain NT)).